We begin with the raw amino-acid sequence, 533 residues long: WD repeat-containing protein PAC11 (533 aa).

A compositionally biased stretch (basic and acidic residues) spans 1–19 (MERLKQLEEKRRQLKELRE). Residues 1–36 (MERLKQLEEKRRQLKELRERRKQASLFPGSETMGHH) are disordered. WD repeat units follow at residues 380-422 (FDEV…YLSL) and 432-475 (NHST…AIIG).

In terms of assembly, interacts with NUM1, when DYN1 is present.

Its subcellular location is the cytoplasm. The protein resides in the cytoskeleton. Functionally, required for viability in the absence of the kinesin-related CIN8 mitotic motor. May be a dynein intermediate chain. This is WD repeat-containing protein PAC11 (PAC11) from Saccharomyces cerevisiae (strain ATCC 204508 / S288c) (Baker's yeast).